The sequence spans 600 residues: Zinc finger and BTB domain-containing protein 46 (600 aa).

The 69-residue stretch at 31-99 (CDACVVVEGK…MYSAHLALTS (69 aa)) folds into the BTB domain. The segment at 173 to 222 (RRTSPANSSGDSAIASCHEGGSSYGKEDQEPKADGPDDVSSQSLWPGDVG) is disordered. Basic and acidic residues predominate over residues 197-207 (GKEDQEPKADG). Lysine 229 is covalently cross-linked (Glycyl lysine isopeptide (Lys-Gly) (interchain with G-Cter in SUMO2)). Phosphoserine is present on serine 234. Residues 235 to 278 (PSHYGGSELPSSKDTAIQNSLSEQGSGDGWQPTGRRKNRKNKET) are disordered. Positions 243-259 (LPSSKDTAIQNSLSEQG) are enriched in polar residues. 2 consecutive C2H2-type zinc fingers follow at residues 418-436 (FKCP…LKRH) and 446-468 (YPCE…TLVH). The interval 513 to 600 (LDHGGGGEGS…EPDKDFAWIS (88 aa)) is disordered. Acidic residues predominate over residues 533 to 555 (YLEDPDDPRGEAEEELVEDEDED). Basic and acidic residues-rich tracts occupy residues 556 to 574 (VAKW…LLGD) and 591 to 600 (EPDKDFAWIS).

Sumoylated. Desumoylation by DESI1 reverses transcriptional repression activity.

The protein resides in the nucleus. In terms of biological role, functions as a transcriptional repressor for PRDM1. In Mus musculus (Mouse), this protein is Zinc finger and BTB domain-containing protein 46 (Zbtb46).